We begin with the raw amino-acid sequence, 426 residues long: uncharacterized protein (426 aa).

His-277 is a binding site for Zn(2+). The active site involves Glu-278. Zn(2+) is bound by residues His-281 and Glu-357.

This sequence belongs to the peptidase M48B family. Requires Zn(2+) as cofactor.

This is an uncharacterized protein from Bacillus subtilis (strain 168).